A 439-amino-acid chain; its full sequence is MSNYFDKIAKVNYEGANSTNPFAFKHYNPNEVILGKTVEEHLRLAVCYWHTFCWTGNDMFGAGSLDRSWQKTGDLLVGAKQKAEIAFEFFQKLGVPYYSFHDVDIAPESNNFKEYLHNFNTIVDILEKKQSETGVKLLWGTANCFTNPRYMSGASTNPNPEVFAWAAAQVFTAMNATQRLGGENYVLWGGREGYETLLNTDLKREREQIGRFMQLVVEHKYKIGFQGTLLIEPKPQEPTKHQYDYDVATVYGFLKQFGLENEIKVNIEANHATLAGHTFQHEIATATSLGIFGSIDANRGDPQLGWDTDQFPNSVEENTLAMYEILKAGGFTTGGFNFDAKIRRQSTDPYDLFHAHIGAMDVLALSLKRAAKMIEDQTLQKVVDNRYAGWDQELGQKILSGKASLEDLAKIVETQGLDPKPVSGQQEYLENLVNSYLYR.

Catalysis depends on residues histidine 101 and aspartate 104. Residues glutamate 232, glutamate 268, histidine 271, aspartate 296, aspartate 307, aspartate 309, and aspartate 339 each coordinate Mg(2+).

Belongs to the xylose isomerase family. As to quaternary structure, homotetramer. Mg(2+) serves as cofactor.

Its subcellular location is the cytoplasm. It catalyses the reaction alpha-D-xylose = alpha-D-xylulofuranose. This Histophilus somni (strain 2336) (Haemophilus somnus) protein is Xylose isomerase.